The chain runs to 317 residues: Universal stress protein MT2052 (317 aa).

Residues Gly13, 128–134, 142–143, Gly175, Asp208, 277–283, and 291–293 each bind ATP; these read GYRGQGA, SV, GSHGRGG, and SVS.

The protein belongs to the universal stress protein A family.

This is Universal stress protein MT2052 from Mycobacterium tuberculosis (strain CDC 1551 / Oshkosh).